We begin with the raw amino-acid sequence, 259 residues long: Ribonuclease HII (259 aa).

The RNase H type-2 domain maps to 70–258; it reads TLIAGIDEVG…VKSLVLGKKE (189 aa). Positions 76, 77, and 168 each coordinate a divalent metal cation.

It belongs to the RNase HII family. The cofactor is Mn(2+). Requires Mg(2+) as cofactor.

The protein resides in the cytoplasm. It carries out the reaction Endonucleolytic cleavage to 5'-phosphomonoester.. Endonuclease that specifically degrades the RNA of RNA-DNA hybrids. In Streptococcus pneumoniae (strain P1031), this protein is Ribonuclease HII.